We begin with the raw amino-acid sequence, 252 residues long: Ribosomal RNA small subunit methyltransferase J (252 aa).

Residues 101–102 (RD), 117–118 (ER), 153–154 (SS), and Asp-171 contribute to the S-adenosyl-L-methionine site.

This sequence belongs to the methyltransferase superfamily. RsmJ family.

It is found in the cytoplasm. It catalyses the reaction guanosine(1516) in 16S rRNA + S-adenosyl-L-methionine = N(2)-methylguanosine(1516) in 16S rRNA + S-adenosyl-L-homocysteine + H(+). Its function is as follows. Specifically methylates the guanosine in position 1516 of 16S rRNA. In Salmonella typhi, this protein is Ribosomal RNA small subunit methyltransferase J.